The following is a 559-amino-acid chain: Glucose-6-phosphate isomerase (559 aa).

E363 serves as the catalytic Proton donor. Active-site residues include H394 and K523.

This sequence belongs to the GPI family.

It is found in the cytoplasm. It carries out the reaction alpha-D-glucose 6-phosphate = beta-D-fructose 6-phosphate. It participates in carbohydrate biosynthesis; gluconeogenesis. Its pathway is carbohydrate degradation; glycolysis; D-glyceraldehyde 3-phosphate and glycerone phosphate from D-glucose: step 2/4. In terms of biological role, catalyzes the reversible isomerization of glucose-6-phosphate to fructose-6-phosphate. The polypeptide is Glucose-6-phosphate isomerase (Bartonella henselae (strain ATCC 49882 / DSM 28221 / CCUG 30454 / Houston 1) (Rochalimaea henselae)).